The following is a 34-amino-acid chain: SGSDGGVCPKILQRCRRDSDCPGACICRGNGYCG.

The segment at residues 1-34 (SGSDGGVCPKILQRCRRDSDCPGACICRGNGYCG) is a cross-link (cyclopeptide (Ser-Gly)). Cystine bridges form between Cys8–Cys25, Cys15–Cys27, and Cys21–Cys33.

Post-translationally, this is a cyclic peptide.

The protein resides in the secreted. Functionally, inhibits trypsin; probably participates in a plant defense mechanism. This is Trypsin inhibitor 1 from Momordica cochinchinensis (Spiny bitter cucumber).